A 1352-amino-acid chain; its full sequence is MAAAGARRSPGRGLGLRGRPRLGFHPGPPPPPPPPLLLLFLLLLPPPPLLAGATAAAASREPDSPCRLKTVTVSTLPALRESDIGWSGARTGAAAGAGAGTGAGAGAAAAAASAASPGSAGSAGTAAESRLLLFVRNELPGRIAVQDDLDNTELPFFTLEMSGTAADISLVHWRQQWLENGTLYFHVSMSSSGQLAQATAPTLQEPSEIVEEQMHILHISVMGGLIALLLLLLVFTVALYAQRRWQKRRRIPQKSASTEATHEIHYIPSVLLGPQARESFRSSRLQTHNSVIGVPIRETPILDDYDYEEEEEPPRRANHVSREDEFGSQMTHALDSLGRPGEEKVEFEKKAAAEATQETVESLMQKFKESFRANTPVEIGQLQPASRSSTSAGKRKRRNKSRGGISFGRTKGTSGSEADDETQLTFYTEQYRSRRRSKGLLKSPVNKTALTLIAVSSCILAMVCGNQMSCPLTVKVTLHVPEHFIADGSSFVVSEGSYLDISDWLNPAKLSLYYQINATSPWVRDLCGQRTTDACEQLCDPDTGECSCHEGYAPDPVHRHLCVRSDWGQSEGPWPYTTLERGYDLVTGEQAPEKILRSTFSLGQGLWLPVSKSFVVPPVELSINPLASCKTDVLVTEDPADVREEAMLSTYFETINDLLSSFGPVRDCSRNNGGCTRNFKCVSDRQVDSSGCVCPEELKPMKDGSGCYDHSKGIDCSDGFNGGCEQLCLQQTLPLPYDTTSSTIFMFCGCVEEYKLAPDGKSCLMLSDVCEGPKCLKPDSKFNDTLFGEMLHGYNNRTQHVNQGQVFQMTFRENNFIKDFPQLADGLLVIPLPVEEQCRGVLSEPLPDLQLLTGDIRYDEAMGYPMVQQWRVRSNLYRVKLSTITLSAGFTNVLKILTKESSRDELLSFIQHYGSHYIAEALYGSELTCIIHFPSKKVQQQLWLQYQKETTELGSKKELKSMPFITYLSGLLTAQMLSDDQLISGVEIRCEEKGRCPSTCHLCRRPGKEQLSPTPVLLEINRVVPLYTLIQDNGTKEAFKNALMSSYWCSGKGDVIDDWCRCDLSAFDASGLPNCSPLPQPVLRLSPTVEPSSTVVSLEWVDVQPAIGTKVSDYILQHKKVDEYTDTDLYTGEFLSFADDLLSGLGTSCVAAGRSHGEVPEVSIYSVIFKCLEPDGLYKFTLYAVDTRGRHSELSTVTLRTACPLVDDNKAEEIADKIYNLYNGYTSGKEQQTAYNTLMEVSASMLFRVQHHYNSHYEKFGDFVWRSEDELGPRKAHLILRRLERVSSHCSSLLRSAYIQSRVDTIPYLFCRSEEVRPAGMVWYSILKDTKITCEEKMVSMARNTYGETKGR.

The disordered stretch occupies residues 1-31 (MAAAGARRSPGRGLGLRGRPRLGFHPGPPPP). An N-terminal signal peptide occupies residues 1 to 51 (MAAAGARRSPGRGLGLRGRPRLGFHPGPPPPPPPPLLLLFLLLLPPPPLLA). Over 52–218 (GATAAAASRE…IVEEQMHILH (167 aa)) the chain is Lumenal. An N-linked (GlcNAc...) asparagine glycan is attached at asparagine 180. The helical transmembrane segment at 219 to 239 (ISVMGGLIALLLLLLVFTVAL) threads the bilayer. Residues 240-447 (YAQRRWQKRR…KGLLKSPVNK (208 aa)) are Cytoplasmic-facing. Disordered regions lie at residues 308 to 327 (EEEE…DEFG) and 375 to 421 (TPVE…ADDE). The span at 383–392 (QPASRSSTSA) shows a compositional bias: polar residues. A helical membrane pass occupies residues 448 to 468 (TALTLIAVSSCILAMVCGNQM). At 469–1352 (SCPLTVKVTL…RNTYGETKGR (884 aa)) the chain is on the lumenal side. 3 consecutive EGF-like domains span residues 523-563 (VRDL…HLCV), 664-708 (PVRD…SGCY), and 712-764 (KGID…KSCL). 9 disulfide bridges follow: cysteine 527/cysteine 539, cysteine 535/cysteine 546, cysteine 548/cysteine 562, cysteine 668/cysteine 681, cysteine 675/cysteine 692, cysteine 694/cysteine 707, cysteine 716/cysteine 728, cysteine 724/cysteine 748, and cysteine 750/cysteine 763. N-linked (GlcNAc...) asparagine glycosylation occurs at asparagine 796. Cystine bridges form between cysteine 838–cysteine 1000, cysteine 929–cysteine 990, and cysteine 996–cysteine 1003. The N-linked (GlcNAc...) asparagine glycan is linked to asparagine 1033. 5 cysteine pairs are disulfide-bonded: cysteine 1049–cysteine 1060, cysteine 1062–cysteine 1075, cysteine 1149–cysteine 1171, cysteine 1203–cysteine 1290, and cysteine 1311–cysteine 1334. The Fibronectin type-III domain maps to 1079–1201 (PQPVLRLSPT…SELSTVTLRT (123 aa)).

It belongs to the astrotactin family. As to quaternary structure, interacts with ASTN1; the interaction is not calcium-dependent. As to expression, detected in cerebellum granule neurons; not detected in astroglia (at protein level). Detected primarily in cerebellum, and at lower levels in brain cortex, olfactory bulb, hindbrain and hippocampus dentate gyrus. Between 6 and 10 days after birth, when granule cell migration occurs in the cerebellum, detected in granule cell precursors in the external germinal layer, the molecular layer, the internal granule layer and in Purkinje neurons. Detected in postmitotic neurons in adult cerebellum.

It localises to the membrane. The protein resides in the perikaryon. Its subcellular location is the cytoplasm. The protein localises to the cell cortex. It is found in the early endosome. It localises to the late endosome. The protein resides in the cytoplasmic vesicle. Its subcellular location is the clathrin-coated vesicle. In terms of biological role, mediates recycling of the neuronal cell adhesion molecule ASTN1 to the anterior pole of the cell membrane in migrating neurons. Promotes ASTN1 internalization and intracellular transport of endocytosed ASTN1. Selectively binds inositol-4,5-bisphosphate, inositol-3,4,5-trisphosphate and inositol-1,3,4,5-tetrakisphosphate, suggesting it is recruited to membranes that contain lipids with a phosphoinositide headgroup. This Mus musculus (Mouse) protein is Astrotactin-2 (Astn2).